The following is an 86-amino-acid chain: Mu-theraphotoxin-Cg2a 1 (86 aa).

The signal sequence occupies residues 1–21 (MKVSVVITLAVLGIMFVWASA). Positions 22-50 (AELEERGSDQRDSPAWLKSMERIFQSEER) are excised as a propeptide. 3 cysteine pairs are disulfide-bonded: Cys-52–Cys-66, Cys-59–Cys-71, and Cys-65–Cys-78. Phe-84 is subject to Phenylalanine amide.

This sequence belongs to the neurotoxin 10 (Hwtx-1) family. 37 (Jztx-31) subfamily. As to expression, expressed by the venom gland.

Its subcellular location is the secreted. Functionally, inhibits both peak current and fast inactivation of voltage-gated sodium channels (Nav) channels. Inhibits the inactivation of Nav on DRG neurons (EC(50)=1.77 uM) and peak current of cardiac myocytes (IC(50)=0.90 uM). The protein is Mu-theraphotoxin-Cg2a 1 of Chilobrachys guangxiensis (Chinese earth tiger tarantula).